A 214-amino-acid chain; its full sequence is Ribonuclease HII (214 aa).

The region spanning 26–214 is the RNase H type-2 domain; the sequence is EIVCGVDEAG…PVREAFDLIR (189 aa). D32, E33, and D124 together coordinate a divalent metal cation.

It belongs to the RNase HII family. The cofactor is Mn(2+). Requires Mg(2+) as cofactor.

The protein resides in the cytoplasm. The catalysed reaction is Endonucleolytic cleavage to 5'-phosphomonoester.. Functionally, endonuclease that specifically degrades the RNA of RNA-DNA hybrids. This chain is Ribonuclease HII, found in Burkholderia mallei (strain NCTC 10247).